Reading from the N-terminus, the 201-residue chain is Dephospho-CoA kinase (201 aa).

One can recognise a DPCK domain in the interval 4 to 201; that stretch reads IIGITGGIAS…LEGGRQDDRD (198 aa). Residue 12–17 participates in ATP binding; sequence ASGKST.

Belongs to the CoaE family.

Its subcellular location is the cytoplasm. The catalysed reaction is 3'-dephospho-CoA + ATP = ADP + CoA + H(+). Its pathway is cofactor biosynthesis; coenzyme A biosynthesis; CoA from (R)-pantothenate: step 5/5. In terms of biological role, catalyzes the phosphorylation of the 3'-hydroxyl group of dephosphocoenzyme A to form coenzyme A. The sequence is that of Dephospho-CoA kinase from Streptococcus pneumoniae serotype 4 (strain ATCC BAA-334 / TIGR4).